The sequence spans 99 residues: Transcription and mRNA export factor SUS1 (99 aa).

Belongs to the ENY2 family. In terms of assembly, component of the nuclear pore complex (NPC)-associated TREX-2 complex (transcription and export complex 2), composed of at least SUS1, SAC3, THP1, SEM1, and CDC31. TREX-2 contains 2 SUS1 chains. The TREX-2 complex interacts with the nucleoporin NUP1. Component of the 1.8 MDa SAGA transcription coactivator-HAT complex. SAGA is built of 5 distinct domains with specialized functions. Within the SAGA complex, SUS1, SGF11, SGF73 and UBP8 form an additional subcomplex of SAGA called the DUB module (deubiquitination module). Interacts directly with THP1, SAC3, SGF11, and with the RNA polymerase II.

The protein resides in the nucleus. Its subcellular location is the nucleoplasm. It localises to the cytoplasm. It is found in the P-body. In terms of biological role, involved in mRNA export coupled transcription activation by association with both the TREX-2 and the SAGA complexes. At the promoters, SAGA is required for recruitment of the basal transcription machinery. It influences RNA polymerase II transcriptional activity through different activities such as TBP interaction and promoter selectivity, interaction with transcription activators, and chromatin modification through histone acetylation and deubiquitination. Within the SAGA complex, participates in a subcomplex required for deubiquitination of H2B and for the maintenance of steady-state H3 methylation levels. The TREX-2 complex functions in docking export-competent ribonucleoprotein particles (mRNPs) to the nuclear entrance of the nuclear pore complex (nuclear basket). TREX-2 participates in mRNA export and accurate chromatin positioning in the nucleus by tethering genes to the nuclear periphery. May also be involved in cytoplasmic mRNA decay by interaction with components of P-bodies. This chain is Transcription and mRNA export factor SUS1, found in Eremothecium gossypii (strain ATCC 10895 / CBS 109.51 / FGSC 9923 / NRRL Y-1056) (Yeast).